A 609-amino-acid chain; its full sequence is Zinc metalloproteinase-disintegrin-like (609 aa).

Positions 1-20 (MIQVLLVTICLAALPYQGSS) are cleaved as a signal peptide. Residues 21–189 (IILESGNVND…KKASQLVVTA (169 aa)) constitute a propeptide that is removed on maturation. The region spanning 198–393 (RFVELVLVVD…QNPECIVNEP (196 aa)) is the Peptidase M12B domain. Glu201 and Asp285 together coordinate Ca(2+). 3 disulfides stabilise this stretch: Cys308-Cys388, Cys348-Cys372, and Cys350-Cys355. His333 is a binding site for Zn(2+). Glu334 is an active-site residue. Zn(2+)-binding residues include His337 and His343. The N-linked (GlcNAc...) asparagine glycan is linked to Asn371. 8 residues coordinate Ca(2+): Cys388, Asn391, Val403, Asn406, Leu408, Glu410, Glu413, and Asp416. The Disintegrin domain maps to 401 to 487 (PPVCGNELLE…ECPADVFHKN (87 aa)). 14 cysteine pairs are disulfide-bonded: Cys404/Cys433, Cys415/Cys428, Cys417/Cys423, Cys427/Cys450, Cys441/Cys447, Cys446/Cys472, Cys459/Cys479, Cys466/Cys498, Cys491/Cys503, Cys510/Cys560, Cys525/Cys571, Cys538/Cys548, Cys555/Cys597, and Cys591/Cys602. The D/ECD-tripeptide signature appears at 465-467 (ECD). Ca(2+)-binding residues include Asp467, Pro468, Glu470, Asp482, and Val483.

It belongs to the venom metalloproteinase (M12B) family. P-III subfamily. P-IIIa sub-subfamily. Monomer. Zn(2+) serves as cofactor. In terms of tissue distribution, expressed by the venom gland.

It localises to the secreted. Functionally, this protein is a zinc metalloprotease from snake venom that possesses hemorrhagic activity. The sequence is that of Zinc metalloproteinase-disintegrin-like from Crotalus durissus durissus (Central American rattlesnake).